The following is a 280-amino-acid chain: DegV domain-containing protein CA_C1624 (280 aa).

Residues 4–279 (IALITDSTSD…PGLLGVVIFK (276 aa)) enclose the DegV domain. Hexadecanoate contacts are provided by T60 and S93.

Functionally, may bind long-chain fatty acids, such as palmitate, and may play a role in lipid transport or fatty acid metabolism. This Clostridium acetobutylicum (strain ATCC 824 / DSM 792 / JCM 1419 / IAM 19013 / LMG 5710 / NBRC 13948 / NRRL B-527 / VKM B-1787 / 2291 / W) protein is DegV domain-containing protein CA_C1624.